Reading from the N-terminus, the 534-residue chain is Probable alanine aminotransferase, mitochondrial (534 aa).

Residues 1 to 18 (MFKRSLKVLLSNPPINRV) constitute a mitochondrion transit peptide. Lysine 352 carries the post-translational modification N6-(pyridoxal phosphate)lysine.

It belongs to the class-I pyridoxal-phosphate-dependent aminotransferase family. Alanine aminotransferase subfamily. Homodimer. Pyridoxal 5'-phosphate is required as a cofactor.

The protein localises to the mitochondrion matrix. It catalyses the reaction L-alanine + 2-oxoglutarate = pyruvate + L-glutamate. The protein operates within amino-acid degradation; L-alanine degradation via transaminase pathway; pyruvate from L-alanine: step 1/1. In Dictyostelium discoideum (Social amoeba), this protein is Probable alanine aminotransferase, mitochondrial (gpt).